Consider the following 43-residue polypeptide: Protein PsbN (43 aa).

A helical transmembrane segment spans residues 5–25 (LILSIFIFSLLLGITSYSIYI).

It belongs to the PsbN family.

The protein resides in the plastid. It localises to the chloroplast thylakoid membrane. In terms of biological role, may play a role in photosystem I and II biogenesis. In Cyanidium caldarium (Red alga), this protein is Protein PsbN.